We begin with the raw amino-acid sequence, 98 residues long: Small ribosomal subunit protein bS6 (98 aa).

Belongs to the bacterial ribosomal protein bS6 family.

Its function is as follows. Binds together with bS18 to 16S ribosomal RNA. The sequence is that of Small ribosomal subunit protein bS6 from Staphylococcus haemolyticus (strain JCSC1435).